A 257-amino-acid chain; its full sequence is Thiazole synthase (257 aa).

Lys-96 (schiff-base intermediate with DXP) is an active-site residue. Residues Gly-157, 184-185 (AG), and 206-207 (NT) contribute to the 1-deoxy-D-xylulose 5-phosphate site.

This sequence belongs to the ThiG family. As to quaternary structure, homotetramer. Forms heterodimers with either ThiH or ThiS.

The protein localises to the cytoplasm. The catalysed reaction is [ThiS sulfur-carrier protein]-C-terminal-Gly-aminoethanethioate + 2-iminoacetate + 1-deoxy-D-xylulose 5-phosphate = [ThiS sulfur-carrier protein]-C-terminal Gly-Gly + 2-[(2R,5Z)-2-carboxy-4-methylthiazol-5(2H)-ylidene]ethyl phosphate + 2 H2O + H(+). The protein operates within cofactor biosynthesis; thiamine diphosphate biosynthesis. Its function is as follows. Catalyzes the rearrangement of 1-deoxy-D-xylulose 5-phosphate (DXP) to produce the thiazole phosphate moiety of thiamine. Sulfur is provided by the thiocarboxylate moiety of the carrier protein ThiS. In vitro, sulfur can be provided by H(2)S. This is Thiazole synthase from Bartonella henselae (strain ATCC 49882 / DSM 28221 / CCUG 30454 / Houston 1) (Rochalimaea henselae).